The following is a 258-amino-acid chain: Tetraspanin-15 (258 aa).

Residues 1 to 20 (MGALGDSAYGARGRLIKFSY) are Cytoplasmic-facing. A helical transmembrane segment spans residues 21–41 (IVTALISILFSISCICYGIWL). Residues 42-62 (LARRSQYAELVSPSLYVDVGR) lie on the Extracellular side of the membrane. A helical transmembrane segment spans residues 63-83 (ILVIISILSILNYLICFYAIF). Residues 84–93 (KEMRCFVTSC) are Cytoplasmic-facing. A helical membrane pass occupies residues 94–114 (AVASIVIAVMLIIGGCIGLNF). Residues 115-223 (RDQLTHYTPL…STCYEPLQND (109 aa)) are Extracellular-facing. The chain crosses the membrane as a helical span at residues 224–244 (LLHVMNVASWLCITNAIVQII). Over 245 to 258 (PSVAGCWYSKLIRK) the chain is Cytoplasmic.

The protein belongs to the tetraspanin (TM4SF) family. As to quaternary structure, interacts with doxa-1 and bli-3. As to expression, expressed in the body wall (hyp7 hypodermal syncitium), pharynx and vulva. Expressed in a punctate pattern along the thick region of the hypodermis.

The protein resides in the membrane. Plays a role in cuticle biogenesis. In complex with doxa-1 and the dual oxidase bli-3, promotes the generation of reactive oxygen species (ROS) and tyrosine cross-linking of collagen, thus stabilizing cuticular extracellular matrix. The polypeptide is Tetraspanin-15 (Caenorhabditis elegans).